The chain runs to 534 residues: Glucans biosynthesis protein D (534 aa).

The tat-type signal signal peptide spans 1–28 (MYRRDFLKSVTAAWVAFGLPNPLGGAFA).

Belongs to the OpgD/OpgG family. Predicted to be exported by the Tat system. The position of the signal peptide cleavage has not been experimentally proven.

Its subcellular location is the periplasm. It participates in glycan metabolism; osmoregulated periplasmic glucan (OPG) biosynthesis. Functionally, probably involved in the control of the structural glucose backbone of osmoregulated periplasmic glucans (OPGs). The polypeptide is Glucans biosynthesis protein D (Xylella fastidiosa (strain M23)).